A 100-amino-acid chain; its full sequence is Phosphoribosyl-ATP pyrophosphatase (100 aa).

Belongs to the PRA-PH family.

It is found in the cytoplasm. It carries out the reaction 1-(5-phospho-beta-D-ribosyl)-ATP + H2O = 1-(5-phospho-beta-D-ribosyl)-5'-AMP + diphosphate + H(+). The protein operates within amino-acid biosynthesis; L-histidine biosynthesis; L-histidine from 5-phospho-alpha-D-ribose 1-diphosphate: step 2/9. The polypeptide is Phosphoribosyl-ATP pyrophosphatase (hisE) (Methanopyrus kandleri (strain AV19 / DSM 6324 / JCM 9639 / NBRC 100938)).